We begin with the raw amino-acid sequence, 103 residues long: Defensin-like protein 268 (103 aa).

Residues M1–A24 form the signal peptide. 4 disulfides stabilise this stretch: C44/C103, C68/C87, C74/C98, and C78/C100.

It belongs to the DEFL family.

Its subcellular location is the secreted. This Arabidopsis thaliana (Mouse-ear cress) protein is Defensin-like protein 268.